Consider the following 336-residue polypeptide: Atypical chemokine receptor 1 (336 aa).

The mediates Plasmodium vivax Duffy receptor (PVDR) binding stretch occupies residues methionine 1 to tyrosine 30. Over methionine 1–proline 63 the chain is Extracellular. The N-linked (GlcNAc...) asparagine glycan is linked to asparagine 16. Sulfotyrosine is present on tyrosine 30. Asparagine 33 is a glycosylation site (N-linked (GlcNAc...) asparagine). Position 41 is a sulfotyrosine (tyrosine 41). Intrachain disulfides connect cysteine 51–cysteine 276 and cysteine 129–cysteine 195. The chain crosses the membrane as a helical span at residues phenylalanine 64 to phenylalanine 84. Residues arginine 85–glycine 95 are Cytoplasmic-facing. A helical membrane pass occupies residues tryptophan 96–leucine 116. Topologically, residues alanine 117 to cysteine 129 are extracellular. A helical membrane pass occupies residues serine 130–leucine 153. At glycine 154 to threonine 166 the chain is on the cytoplasmic side. A helical transmembrane segment spans residues leucine 167 to alanine 187. Residues serine 188–glutamine 207 lie on the Extracellular side of the membrane. A helical membrane pass occupies residues alanine 208–alanine 228. The Cytoplasmic segment spans residues lysine 229 to asparagine 244. The helical transmembrane segment at isoleucine 245–leucine 265 threads the bilayer. At valine 266–asparagine 287 the chain is on the extracellular side. A helical transmembrane segment spans residues leucine 288–cysteine 308. Residues histidine 309–serine 336 lie on the Cytoplasmic side of the membrane.

Belongs to the G-protein coupled receptor 1 family. Atypical chemokine receptor subfamily. (Microbial infection) Interacts (via N-terminal extracellular domain) with Plasmodium vivax Duffy receptor (PVDR) (via PvRII region). As to quaternary structure, (Microbial infection) Interacts (via N-terminal extracellular domain) with Plasmodium knowlesi Duffy receptor alpha form (DBPalpha) (via region II). Post-translationally, sulfation at Tyr-41 facilitates interaction with MGSA/CXCL1, RANTES/CCL5 and MCP-1/CCL2 but not IL8/CXCL8. Sulfation at Tyr-30 facilitates interaction with IL8/CXCL8. (Microbial infection) Sulfation at Tyr-41 facilitates interaction with Plasmodium vivax Duffy receptor (PVDR). Sulfation at Tyr-30/Tyr-41 and Tyr-41 alone increases binding affinity of Plasmodium vivax parasites and likely promotes invasion of red blood cells. In terms of processing, (Microbial infection) Sulfation at Tyr-41 facilitates interaction with Plasmodium knowlesi Duffy receptor alpha form (DBPalpha). Sulfation at Tyr-30/Tyr-41 and Tyr-41 alone increases binding affinity of Plasmodium knowlesi parasites and likely promotes invasion of red blood cells. As to expression, found in adult kidney, adult spleen, bone marrow and fetal liver. In particular, it is expressed along postcapillary venules throughout the body, except in the adult liver. Erythroid cells and postcapillary venule endothelium are the principle tissues expressing duffy. Fy(-A-B) individuals do not express duffy in the bone marrow, however they do, in postcapillary venule endothelium.

It is found in the early endosome. Its subcellular location is the recycling endosome. The protein localises to the membrane. Its function is as follows. Atypical chemokine receptor that controls chemokine levels and localization via high-affinity chemokine binding that is uncoupled from classic ligand-driven signal transduction cascades, resulting instead in chemokine sequestration, degradation, or transcytosis. Also known as interceptor (internalizing receptor) or chemokine-scavenging receptor or chemokine decoy receptor. Has a promiscuous chemokine-binding profile, interacting with inflammatory chemokines of both the CXC and the CC subfamilies but not with homeostatic chemokines. Acts as a receptor for chemokines including CCL2, CCL5, CCL7, CCL11, CCL13, CCL14, CCL17, CXCL5, CXCL6, IL8/CXCL8, CXCL11, GRO, RANTES, MCP-1 and TARC. May regulate chemokine bioavailability and, consequently, leukocyte recruitment through two distinct mechanisms: when expressed in endothelial cells, it sustains the abluminal to luminal transcytosis of tissue-derived chemokines and their subsequent presentation to circulating leukocytes; when expressed in erythrocytes, serves as blood reservoir of cognate chemokines but also as a chemokine sink, buffering potential surges in plasma chemokine levels. In terms of biological role, (Microbial infection) Acts as a receptor for the malaria parasite Plasmodium vivax. Functionally, (Microbial infection) Acts as a receptor for the malaria parasite Plasmodium knowlesi. This Homo sapiens (Human) protein is Atypical chemokine receptor 1 (ACKR1).